Consider the following 126-residue polypeptide: Holo-[acyl-carrier-protein] synthase (126 aa).

Residues Asp9 and Glu58 each coordinate Mg(2+).

The protein belongs to the P-Pant transferase superfamily. AcpS family. The cofactor is Mg(2+).

The protein resides in the cytoplasm. The enzyme catalyses apo-[ACP] + CoA = holo-[ACP] + adenosine 3',5'-bisphosphate + H(+). In terms of biological role, transfers the 4'-phosphopantetheine moiety from coenzyme A to a Ser of acyl-carrier-protein. This chain is Holo-[acyl-carrier-protein] synthase, found in Sodalis glossinidius (strain morsitans).